We begin with the raw amino-acid sequence, 474 residues long: Transcription termination factor Rho (474 aa).

A disordered region spans residues 1-60; sequence MTEELDNTPSPAGDIPQETLPKPLPAPEETAGEQPAAAPEENRGNAVREEEEAAPVLEQI. A Rho RNA-BD domain is found at 107 to 182; the sequence is EVVVSGVMEQ…ASVISVEDIP (76 aa). ATP is bound by residues 226–231, 238–243, and Arg-269; these read GKGQRG and RGGKTV.

This sequence belongs to the Rho family. Homohexamer. The homohexamer assembles into an open ring structure.

Its function is as follows. Facilitates transcription termination by a mechanism that involves Rho binding to the nascent RNA, activation of Rho's RNA-dependent ATPase activity, and release of the mRNA from the DNA template. This Akkermansia muciniphila (strain ATCC BAA-835 / DSM 22959 / JCM 33894 / BCRC 81048 / CCUG 64013 / CIP 107961 / Muc) protein is Transcription termination factor Rho.